The sequence spans 544 residues: Apolipoprotein N-acyltransferase 1 (544 aa).

A run of 6 helical transmembrane segments spans residues 30-50, 57-79, 91-111, 115-135, 157-177, and 197-217; these read LNLNGFPFFAYIALIPFFLLL, FSFLWGAFSGALSYFIFNFWIIF, KYCILYSVLFFVLKIIDSYFS, FIFQTIAWVAFEYLNTLGFLG, IFGVWGISFLLVFFSACSASF, and PMMIWVGTFFAFILYGAFTKI. The 277-residue stretch at 225 to 501 folds into the CN hydrolase domain; sequence ARIALVQPNR…KDILVADVTV (277 aa). Glu272 acts as the Proton acceptor in catalysis. Residue Lys360 is part of the active site. The Nucleophile role is filled by Cys412. The chain crosses the membrane as a helical span at residues 514–534; the sequence is GDFFGVLCTIVLILNLCFIII.

The protein belongs to the CN hydrolase family. Apolipoprotein N-acyltransferase subfamily.

The protein resides in the cell inner membrane. The catalysed reaction is N-terminal S-1,2-diacyl-sn-glyceryl-L-cysteinyl-[lipoprotein] + a glycerophospholipid = N-acyl-S-1,2-diacyl-sn-glyceryl-L-cysteinyl-[lipoprotein] + a 2-acyl-sn-glycero-3-phospholipid + H(+). Its pathway is protein modification; lipoprotein biosynthesis (N-acyl transfer). Catalyzes the phospholipid dependent N-acylation of the N-terminal cysteine of apolipoprotein, the last step in lipoprotein maturation. In Treponema denticola (strain ATCC 35405 / DSM 14222 / CIP 103919 / JCM 8153 / KCTC 15104), this protein is Apolipoprotein N-acyltransferase 1.